The primary structure comprises 79 residues: Short neurotoxin 2 (79 aa).

The signal sequence occupies residues 1-19; it reads PLLLTLVVVTIVCLDLGYT. Intrachain disulfides connect cysteine 22–cysteine 41, cysteine 36–cysteine 58, cysteine 60–cysteine 71, and cysteine 72–cysteine 77.

The protein belongs to the three-finger toxin family. Short-chain subfamily. Type I alpha-neurotoxin sub-subfamily. As to expression, expressed by the venom gland.

The protein resides in the secreted. In terms of biological role, binds to muscle nicotinic acetylcholine receptor (nAChR) and inhibit acetylcholine from binding to the receptor, thereby impairing neuromuscular transmission. This chain is Short neurotoxin 2, found in Hydrophis cyanocinctus (Asian annulated sea snake).